The primary structure comprises 130 residues: Small ribosomal subunit protein uS9 (130 aa).

It belongs to the universal ribosomal protein uS9 family.

In Haemophilus influenzae (strain ATCC 51907 / DSM 11121 / KW20 / Rd), this protein is Small ribosomal subunit protein uS9 (rpsI).